The following is a 35-amino-acid chain: Photosystem II reaction center protein T (35 aa).

The helical transmembrane segment at 3–23 threads the bilayer; the sequence is ALVYTFLLVSTLGILFFAIFF.

This sequence belongs to the PsbT family. As to quaternary structure, PSII is composed of 1 copy each of membrane proteins PsbA, PsbB, PsbC, PsbD, PsbE, PsbF, PsbH, PsbI, PsbJ, PsbK, PsbL, PsbM, PsbT, PsbY, PsbZ, Psb30/Ycf12, at least 3 peripheral proteins of the oxygen-evolving complex and a large number of cofactors. It forms dimeric complexes.

The protein localises to the plastid. Its subcellular location is the chloroplast thylakoid membrane. In terms of biological role, found at the monomer-monomer interface of the photosystem II (PS II) dimer, plays a role in assembly and dimerization of PSII. PSII is a light-driven water plastoquinone oxidoreductase, using light energy to abstract electrons from H(2)O, generating a proton gradient subsequently used for ATP formation. The sequence is that of Photosystem II reaction center protein T from Gnetum gnemon (Spanish joint-fir).